The primary structure comprises 291 residues: NAD kinase (291 aa).

Asp-73 functions as the Proton acceptor in the catalytic mechanism. NAD(+)-binding positions include 73 to 74 (DG), 147 to 148 (ND), Arg-175, Asp-177, and Gln-246.

The protein belongs to the NAD kinase family. The cofactor is a divalent metal cation.

It is found in the cytoplasm. The catalysed reaction is NAD(+) + ATP = ADP + NADP(+) + H(+). Its function is as follows. Involved in the regulation of the intracellular balance of NAD and NADP, and is a key enzyme in the biosynthesis of NADP. Catalyzes specifically the phosphorylation on 2'-hydroxyl of the adenosine moiety of NAD to yield NADP. The sequence is that of NAD kinase from Chromobacterium violaceum (strain ATCC 12472 / DSM 30191 / JCM 1249 / CCUG 213 / NBRC 12614 / NCIMB 9131 / NCTC 9757 / MK).